A 263-amino-acid chain; its full sequence is Phosphoinositide-3-kinase-interacting protein 1 (263 aa).

The N-terminal stretch at 1–18 (MFGRLYFMLLLSVGLVDC) is a signal peptide. The Extracellular portion of the chain corresponds to 19–163 (LSVVKDCITN…SGPKKKKDLG (145 aa)). A Kringle domain is found at 24-99 (DCITNNGEDY…KKEACDIRIC (76 aa)). 3 cysteine pairs are disulfide-bonded: Cys25–Cys99, Cys46–Cys80, and Cys69–Cys94. N-linked (GlcNAc...) asparagine glycosylation is present at Asn103. A helical transmembrane segment spans residues 164–184 (TLGYVLAVFMMAIIILLGGGI). At 185-263 (TMGYFYKRGR…LMGSAGTPGA (79 aa)) the chain is on the cytoplasmic side. Positions 239-263 (NNQTPTQEPVEGADPLMGSAGTPGA) are disordered.

The protein localises to the cell membrane. Functionally, negative regulator of hepatic phosphatidylinositol 3-kinase (PI3K) activity. In Danio rerio (Zebrafish), this protein is Phosphoinositide-3-kinase-interacting protein 1 (pik3ip1).